The chain runs to 249 residues: Homeobox-leucine zipper protein HOX6 (249 aa).

A disordered region spans residues Met1–Lys32. Residues Gly15–Ala27 are compositionally biased toward gly residues. A DNA-binding region (homeobox) is located at residues Ala27–Gln86. Residues Lys85 to Pro129 are leucine-zipper. The disordered stretch occupies residues Phe194–Glu249. Residues Phe212–Pro242 show a composition bias toward polar residues.

This sequence belongs to the HD-ZIP homeobox family. Class I subfamily. In terms of tissue distribution, expressed in seedlings, roots, leaves, nodes, internodes, flowers and embryo.

Its subcellular location is the nucleus. Its function is as follows. Probable transcription factor that binds to the DNA sequence 5'-CAAT[AT]ATTG-3'. The chain is Homeobox-leucine zipper protein HOX6 (HOX6) from Oryza sativa subsp. indica (Rice).